The sequence spans 88 residues: Cell division topological specificity factor (88 aa).

The protein belongs to the MinE family.

Functionally, prevents the cell division inhibition by proteins MinC and MinD at internal division sites while permitting inhibition at polar sites. This ensures cell division at the proper site by restricting the formation of a division septum at the midpoint of the long axis of the cell. This is Cell division topological specificity factor from Aeromonas salmonicida (strain A449).